Consider the following 315-residue polypeptide: MKIGYFGTPEHSAKLLEALIDSQLTEVLFVVTNPDRPKGRSKIPEPGPVKKKALEYNIPVFQYESIKKEKEKALSDFGLFSADLYVVFAYGSILPKEVYAHSTLTSINLHGSLLPDLRGASPVQTALWKGYTKTGITIQYIGEKMDEGDILLTKEVEIAPEDNTGTLMDKITDAGIESILQLLKTYDGKPFPSVPQAHDKATYCGKIKSEDRILDWSLKSEELHNRIRALYPDMIATTTFRDKRMNILKTKPSSLSLEINPTPGKLKRLDKKRLLTQCGDGRFLEILELQPENKNRMTASDFLNGFRIQEGETFG.

A (6S)-5,6,7,8-tetrahydrofolate-binding site is contributed by 112–115 (SLLP).

This sequence belongs to the Fmt family.

The enzyme catalyses L-methionyl-tRNA(fMet) + (6R)-10-formyltetrahydrofolate = N-formyl-L-methionyl-tRNA(fMet) + (6S)-5,6,7,8-tetrahydrofolate + H(+). Functionally, attaches a formyl group to the free amino group of methionyl-tRNA(fMet). The formyl group appears to play a dual role in the initiator identity of N-formylmethionyl-tRNA by promoting its recognition by IF2 and preventing the misappropriation of this tRNA by the elongation apparatus. This chain is Methionyl-tRNA formyltransferase, found in Leptospira interrogans serogroup Icterohaemorrhagiae serovar copenhageni (strain Fiocruz L1-130).